The sequence spans 267 residues: Ribosomal RNA small subunit methyltransferase A (267 aa).

Residues Asn16, Leu18, Gly43, Glu64, Asp88, and Asn109 each coordinate S-adenosyl-L-methionine.

Belongs to the class I-like SAM-binding methyltransferase superfamily. rRNA adenine N(6)-methyltransferase family. RsmA subfamily.

It localises to the cytoplasm. It carries out the reaction adenosine(1518)/adenosine(1519) in 16S rRNA + 4 S-adenosyl-L-methionine = N(6)-dimethyladenosine(1518)/N(6)-dimethyladenosine(1519) in 16S rRNA + 4 S-adenosyl-L-homocysteine + 4 H(+). Its function is as follows. Specifically dimethylates two adjacent adenosines (A1518 and A1519) in the loop of a conserved hairpin near the 3'-end of 16S rRNA in the 30S particle. May play a critical role in biogenesis of 30S subunits. The sequence is that of Ribosomal RNA small subunit methyltransferase A from Acidithiobacillus ferrooxidans (strain ATCC 23270 / DSM 14882 / CIP 104768 / NCIMB 8455) (Ferrobacillus ferrooxidans (strain ATCC 23270)).